Here is a 141-residue protein sequence, read N- to C-terminus: Aspartate 1-decarboxylase (141 aa).

The active-site Schiff-base intermediate with substrate; via pyruvic acid is the S25. S25 is modified (pyruvic acid (Ser)). T57 is a binding site for substrate. Y58 functions as the Proton donor in the catalytic mechanism. 73-75 contacts substrate; it reads GAA. The segment at 121 to 141 is disordered; sequence ASAPVPGSRTERSPQAVVAGG.

Belongs to the PanD family. As to quaternary structure, heterooctamer of four alpha and four beta subunits. Requires pyruvate as cofactor. Post-translationally, is synthesized initially as an inactive proenzyme, which is activated by self-cleavage at a specific serine bond to produce a beta-subunit with a hydroxyl group at its C-terminus and an alpha-subunit with a pyruvoyl group at its N-terminus.

The protein localises to the cytoplasm. The enzyme catalyses L-aspartate + H(+) = beta-alanine + CO2. It functions in the pathway cofactor biosynthesis; (R)-pantothenate biosynthesis; beta-alanine from L-aspartate: step 1/1. In terms of biological role, catalyzes the pyruvoyl-dependent decarboxylation of aspartate to produce beta-alanine. The polypeptide is Aspartate 1-decarboxylase (Streptomyces griseus subsp. griseus (strain JCM 4626 / CBS 651.72 / NBRC 13350 / KCC S-0626 / ISP 5235)).